Here is a 314-residue protein sequence, read N- to C-terminus: Ribosomal RNA small subunit methyltransferase H (314 aa).

Residues 34 to 36 (GGH), D54, F83, D104, and Q111 each bind S-adenosyl-L-methionine.

It belongs to the methyltransferase superfamily. RsmH family.

It localises to the cytoplasm. It carries out the reaction cytidine(1402) in 16S rRNA + S-adenosyl-L-methionine = N(4)-methylcytidine(1402) in 16S rRNA + S-adenosyl-L-homocysteine + H(+). Functionally, specifically methylates the N4 position of cytidine in position 1402 (C1402) of 16S rRNA. The chain is Ribosomal RNA small subunit methyltransferase H from Ligilactobacillus salivarius (strain UCC118) (Lactobacillus salivarius).